The sequence spans 166 residues: Small ribosomal subunit protein uS5 (166 aa).

Residues 11–74 form the S5 DRBM domain; the sequence is LQEKLIAVNR…EKARRNMINV (64 aa).

This sequence belongs to the universal ribosomal protein uS5 family. In terms of assembly, part of the 30S ribosomal subunit. Contacts proteins S4 and S8.

Its function is as follows. With S4 and S12 plays an important role in translational accuracy. In terms of biological role, located at the back of the 30S subunit body where it stabilizes the conformation of the head with respect to the body. In Haemophilus ducreyi (strain 35000HP / ATCC 700724), this protein is Small ribosomal subunit protein uS5.